The following is a 553-amino-acid chain: MVRFGSAASSDNRRRRCWSWYWGGLLLLWAVAETRADLHYATVYWLEAEKSFQVKDLLDKNGDAYGYYNDTVQSTGWGILEIKAGYGSQLVSNEILMYAAGFLEGYLTASRMSDHVANLYHQMIKNVITEQKVKDFMQKQDEWTRQQIKNNKDDPFWRNAGYIIAQLDGLYMGNLEWAKRQKRTPLTKFEISFLNALGDLLDLIPALSPESRNNGFLSMSEISKMYEWDMGHCSALIKVLPGYENIYFAHSSWFTYAATLRIYKHLDFRIIDPQTKTGRASFSSYPGLLASLDDFYILGSGLIMLQTTNSVFNISLLQQVVPESLFAWERVRIANMMADSGKTWAQTFKKQNSGTYNNQYMILDTKKIKLRRSIEDGTLYIIEQVPNLVEYSDQTTILRKGYWPSYNIPFHKVIYNMSGYREYVQKYGLDFSYEMAPRAKIFRRDQGKVIDIESMKRIMRYNNYKKDPYTKHNPCNTICCRQDLYYMTPVPAGCYDSKVADINMAAKFTAYAINGPPVEKGLPIFSWVHFNETTHQGLPESYNFDFVTMKPVL.

Positions 1–35 are cleaved as a signal peptide; sequence MVRFGSAASSDNRRRRCWSWYWGGLLLLWAVAETR. N-linked (GlcNAc...) asparagine glycans are attached at residues N69, N313, N416, and N531.

It belongs to the phospholipase B-like family. As to expression, expressed by the venom gland.

Its subcellular location is the secreted. Its function is as follows. May cause hemolysis. The polypeptide is Phospholipase-B 81 (Drysdalia coronoides (White-lipped snake)).